A 525-amino-acid polypeptide reads, in one-letter code: GMP synthase [glutamine-hydrolyzing] (525 aa).

The Glutamine amidotransferase type-1 domain occupies 8 to 207 (KILILDFGSQ…ALDICGCAAN (200 aa)). Cys-85 serves as the catalytic Nucleophile. Active-site residues include His-181 and Glu-183. In terms of domain architecture, GMPS ATP-PPase spans 208 to 400 (WKPSSIIEDA…LGLPYNMLYR (193 aa)). Residue 235–241 (SGGVDSS) participates in ATP binding.

As to quaternary structure, homodimer.

The enzyme catalyses XMP + L-glutamine + ATP + H2O = GMP + L-glutamate + AMP + diphosphate + 2 H(+). The protein operates within purine metabolism; GMP biosynthesis; GMP from XMP (L-Gln route): step 1/1. Its function is as follows. Catalyzes the synthesis of GMP from XMP. This chain is GMP synthase [glutamine-hydrolyzing], found in Shewanella baltica (strain OS155 / ATCC BAA-1091).